Reading from the N-terminus, the 77-residue chain is Sec-independent protein translocase protein TatA (77 aa).

Residues 1–21 traverse the membrane as a helical segment; it reads MGGLSIWHWLIVLLIVALVFG. Positions 40–77 are disordered; it reads KDGMREGEAPADPQQLPRSGSVNVDAKDATRSSDSNKA. The segment covering 64-77 has biased composition (basic and acidic residues); the sequence is DAKDATRSSDSNKA.

Belongs to the TatA/E family. In terms of assembly, the Tat system comprises two distinct complexes: a TatABC complex, containing multiple copies of TatA, TatB and TatC subunits, and a separate TatA complex, containing only TatA subunits. Substrates initially bind to the TatABC complex, which probably triggers association of the separate TatA complex to form the active translocon.

The protein localises to the cell inner membrane. In terms of biological role, part of the twin-arginine translocation (Tat) system that transports large folded proteins containing a characteristic twin-arginine motif in their signal peptide across membranes. TatA could form the protein-conducting channel of the Tat system. The sequence is that of Sec-independent protein translocase protein TatA from Burkholderia thailandensis (strain ATCC 700388 / DSM 13276 / CCUG 48851 / CIP 106301 / E264).